The sequence spans 347 residues: Protein RecA (347 aa).

70 to 77 (GPESSGKT) is an ATP binding site.

It belongs to the RecA family.

The protein localises to the cytoplasm. In terms of biological role, can catalyze the hydrolysis of ATP in the presence of single-stranded DNA, the ATP-dependent uptake of single-stranded DNA by duplex DNA, and the ATP-dependent hybridization of homologous single-stranded DNAs. It interacts with LexA causing its activation and leading to its autocatalytic cleavage. This is Protein RecA from Ruegeria pomeroyi (strain ATCC 700808 / DSM 15171 / DSS-3) (Silicibacter pomeroyi).